Consider the following 801-residue polypeptide: Phosphorus acquisition-controlling protein (801 aa).

4 disordered regions span residues 292-317 (GSSP…DLAR), 366-607 (APSQ…SAGA), 628-725 (NTVP…ASTV), and 756-801 (MKMQ…AMDE). Positions 374 to 386 (PLTPLIPTSSSST) are enriched in low complexity. Polar residues-rich tracts occupy residues 387–401 (AGVT…SPEN) and 459–472 (KLSS…SVVG). The interaction with negative regulatory factor stretch occupies residues 446 to 540 (PGIASPATPA…PPSPAVAKPL (95 aa)). Residues 477–486 (DPMDPDHIEN) are compositionally biased toward basic and acidic residues. The segment covering 535-554 (AVAKPLALPSAALSSPQLKP) has biased composition (low complexity). Residues 637 to 646 (SELSTNLTSK) are compositionally biased toward polar residues. In terms of domain architecture, bHLH spans 645 to 735 (SKRTSHKIAE…EMAIEYIKQL (91 aa)). Residues 676 to 687 (PAKEGGDGDGDG) are compositionally biased toward basic and acidic residues. Residues 690–699 (SSGGGGGSGG) show a composition bias toward gly residues. Residues 700–713 (ADREDKREKDKDKA) show a composition bias toward basic and acidic residues. Positions 765–777 (GSGSSVGDAGDLG) are enriched in low complexity.

Binds DNA as a dimer.

The protein resides in the nucleus. Factor that activates the transcription of structural genes for phosphorus acquisition. The polypeptide is Phosphorus acquisition-controlling protein (nuc-1) (Neurospora crassa (strain ATCC 24698 / 74-OR23-1A / CBS 708.71 / DSM 1257 / FGSC 987)).